Here is a 28-residue protein sequence, read N- to C-terminus: DLQCAETCVHSPCIGPCYCKHGLICYRN.

The cyclopeptide (Asp-Asn) cross-link spans 1–28 (DLQCAETCVHSPCIGPCYCKHGLICYRN). Disulfide bonds link C4/C17, C8/C19, and C13/C25.

Contains 3 disulfide bonds. Post-translationally, this is a cyclic peptide. Expressed in root nodules but not in seed.

Probably participates in a plant defense mechanism. Not active against Gram-negative bacterium E.coli ATCC 700926 or Gram-positive bacterium S.aureus ATCC 12600 up to a concentration of 100 uM under low-salt conditions. The polypeptide is Cliotide T21 (Clitoria ternatea (Butterfly pea)).